A 139-amino-acid polypeptide reads, in one-letter code: Growth factor (139 aa).

The first 19 residues, 1 to 19 (MSMKYLMLLFATMIIRSFA), serve as a signal peptide directing secretion. The N-linked (GlcNAc...) asparagine; by host glycan is linked to Asn-34. Positions 41 to 81 (AIRLCGPEGDGYCLHGDCIHARDINGMYCRCSHGYTGIRCQ) constitute an EGF-like domain. 3 disulfide bridges follow: Cys-45–Cys-58, Cys-53–Cys-69, and Cys-71–Cys-80. Asn-95 is a glycosylation site (N-linked (GlcNAc...) asparagine; by host).

The protein belongs to the orthopoxvirus OPG019 family.

The protein resides in the secreted. Functionally, stimulates cellular proliferation (hyperplasia)and mobility around infected cells to promote rapid and efficient spread of infection. This is Growth factor (OPG019) from Camelus.